The primary structure comprises 976 residues: Poly(ADP-ribose) glycohydrolase (976 aa).

Residue methionine 1 is modified to N-acetylmethionine. A disordered region spans residues methionine 1 to alanine 69. The segment at methionine 1 to threonine 456 is A-domain. The Nuclear localization signal signature appears at cysteine 10–tryptophan 16. Residue serine 22 is modified to Phosphoserine. The span at arginine 37–valine 46 shows a compositional bias: basic and acidic residues. Phosphoserine is present on serine 68. The short motif at glutamine 76 to methionine 83 is the PIP-box (PCNA interacting peptide) element. Phosphoserine occurs at positions 133 and 137. The residue at position 139 (threonine 139) is a Phosphothreonine. The disordered stretch occupies residues serine 183–aspartate 350. Composition is skewed to basic and acidic residues over residues proline 191–aspartate 206 and threonine 222–serine 233. Serine 197 bears the Phosphoserine mark. Residue threonine 199 is modified to Phosphothreonine. A phosphoserine mark is found at serine 261, serine 264, serine 286, serine 291, serine 298, serine 302, and serine 316. Residues serine 316–aspartate 331 are compositionally biased toward acidic residues. Polar residues predominate over residues glycine 332–serine 342. Lysine 340 is subject to N6-acetyllysine. Phosphoserine is present on serine 448. The tract at residues glutamine 610–tyrosine 795 is catalytic. Isoleucine 726–glutamate 727 contributes to the substrate binding site. Residue aspartate 737 is part of the active site. Asparagine 740 and glutamine 754 together coordinate substrate. Active-site residues include glutamate 755 and glutamate 756. Residues tyrosine 795 and asparagine 869–alanine 874 contribute to the substrate site.

Belongs to the poly(ADP-ribose) glycohydrolase family. In terms of assembly, interacts with PCNA. Interacts with NUDT5. In terms of tissue distribution, ubiquitously expressed.

The protein localises to the nucleus. It is found in the cytoplasm. It localises to the mitochondrion. Its subcellular location is the mitochondrion matrix. It carries out the reaction [(1''-&gt;2')-ADP-alpha-D-ribose](n) + H2O = [(1''-&gt;2')-ADP-alpha-D-ribose](n-1) + ADP-D-ribose. Poly(ADP-ribose) glycohydrolase that degrades poly(ADP-ribose) by hydrolyzing the ribose-ribose bonds present in poly(ADP-ribose). PARG acts both as an endo- and exoglycosidase, releasing poly(ADP-ribose) of different length as well as ADP-ribose monomers. It is however unable to cleave the ester bond between the terminal ADP-ribose and ADP-ribosylated residues, leaving proteins that are mono-ADP-ribosylated. Poly(ADP-ribose) is synthesized after DNA damage is only present transiently and is rapidly degraded by PARG. Required to prevent detrimental accumulation of poly(ADP-ribose) upon prolonged replicative stress, while it is not required for recovery from transient replicative stress. Responsible for the prevalence of mono-ADP-ribosylated proteins in cells, thanks to its ability to degrade poly(ADP-ribose) without cleaving the terminal protein-ribose bond. Required for retinoid acid-dependent gene transactivation, probably by removing poly(ADP-ribose) from histone demethylase KDM4D, allowing chromatin derepression at RAR-dependent gene promoters. Involved in the synthesis of ATP in the nucleus, together with PARP1, NMNAT1 and NUDT5. Nuclear ATP generation is required for extensive chromatin remodeling events that are energy-consuming. In Homo sapiens (Human), this protein is Poly(ADP-ribose) glycohydrolase.